The chain runs to 116 residues: Vesicle-associated membrane protein 5 (116 aa).

Over 1–72 the chain is Cytoplasmic; the sequence is MAGKELERCQ…RWENARCRIY (72 aa). The v-SNARE coiled-coil homology domain occupies 5 to 65; it reads ELERCQRQAD…KTLAQKKRWE (61 aa). 3 positions are modified to phosphoserine: serine 41, serine 48, and serine 49. A helical; Anchor for type IV membrane protein transmembrane segment spans residues 73–93; sequence MGLAVGIALLILLIVLLVIFL. Topologically, residues 94–116 are vesicular; it reads PQSSKGSSAPQVQDAGPASGPGE. Residues 97–116 are disordered; it reads SKGSSAPQVQDAGPASGPGE.

The protein belongs to the synaptobrevin family.

The protein localises to the cell membrane. The protein resides in the endomembrane system. It is found in the golgi apparatus. It localises to the trans-Golgi network membrane. Its function is as follows. May participate in trafficking events that are associated with myogenesis, such as myoblast fusion and/or GLUT4 trafficking. The protein is Vesicle-associated membrane protein 5 (VAMP5) of Bos taurus (Bovine).